The following is a 369-amino-acid chain: Peptide chain release factor 2 (369 aa).

An N5-methylglutamine modification is found at Gln252.

The protein belongs to the prokaryotic/mitochondrial release factor family. In terms of processing, methylated by PrmC. Methylation increases the termination efficiency of RF2.

The protein localises to the cytoplasm. Its function is as follows. Peptide chain release factor 2 directs the termination of translation in response to the peptide chain termination codons UGA and UAA. The sequence is that of Peptide chain release factor 2 from Staphylococcus aureus (strain bovine RF122 / ET3-1).